A 217-amino-acid polypeptide reads, in one-letter code: Carboxylesterase Culp1 (217 aa).

The N-terminal stretch at 1-32 (MTPRSLVRIVGVVVATTLALVSAPAGGRAAHA) is a signal peptide. The cysteines at positions 35 and 107 are disulfide-linked. Ser-118 serves as the catalytic Nucleophile. Cys-177 and Cys-184 are joined by a disulfide. Asp-181 is a catalytic residue. Residue His-193 is the Proton donor/acceptor of the active site.

This sequence belongs to the cutinase family.

It is found in the secreted. The enzyme catalyses a fatty acid ester + H2O = an aliphatic alcohol + a fatty acid + H(+). Functionally, shows esterase activity, with a preference for short- and medium-chain fatty acids. The chain is Carboxylesterase Culp1 from Mycobacterium bovis (strain ATCC BAA-935 / AF2122/97).